The sequence spans 1077 residues: Response regulator SSK1 (1077 aa).

A Response regulatory domain is found at 854-1000 (NVLIVEDNII…FLERKVMEWG (147 aa)). Asp-903 bears the 4-aspartylphosphate mark.

The protein belongs to the SSK1 family.

It localises to the cytoplasm. Functionally, two-domain response regulator protein in the two-component signal transduction system of the HOG1 pathway. Involved in multi-stress responses and is essential for conidiation, secondary metabolism, autophagy and endocyrosis. In addition, regulates mycelial growth, cell nucleus development, septum formation, and organelle development. Also regulates trap formation and thus plays a crucial role in pathogenicity. The polypeptide is Response regulator SSK1 (Arthrobotrys oligospora (strain ATCC 24927 / CBS 115.81 / DSM 1491) (Nematode-trapping fungus)).